The primary structure comprises 284 residues: 2-dehydro-3-deoxyphosphooctonate aldolase (284 aa).

The protein belongs to the KdsA family.

It localises to the cytoplasm. It catalyses the reaction D-arabinose 5-phosphate + phosphoenolpyruvate + H2O = 3-deoxy-alpha-D-manno-2-octulosonate-8-phosphate + phosphate. It functions in the pathway carbohydrate biosynthesis; 3-deoxy-D-manno-octulosonate biosynthesis; 3-deoxy-D-manno-octulosonate from D-ribulose 5-phosphate: step 2/3. The protein operates within bacterial outer membrane biogenesis; lipopolysaccharide biosynthesis. This is 2-dehydro-3-deoxyphosphooctonate aldolase from Salmonella enteritidis PT4 (strain P125109).